Consider the following 407-residue polypeptide: 1-deoxy-D-xylulose 5-phosphate reductoisomerase (407 aa).

Threonine 25, glycine 26, serine 27, isoleucine 28, asparagine 53, and asparagine 136 together coordinate NADPH. Position 137 (lysine 137) interacts with 1-deoxy-D-xylulose 5-phosphate. Glutamate 138 lines the NADPH pocket. Aspartate 162 is a Mn(2+) binding site. Positions 163, 164, 188, and 211 each coordinate 1-deoxy-D-xylulose 5-phosphate. Residue glutamate 164 coordinates Mn(2+). Glycine 217 serves as a coordination point for NADPH. Positions 224, 229, 230, and 233 each coordinate 1-deoxy-D-xylulose 5-phosphate. Glutamate 233 is a binding site for Mn(2+).

This sequence belongs to the DXR family. Mg(2+) serves as cofactor. It depends on Mn(2+) as a cofactor.

It catalyses the reaction 2-C-methyl-D-erythritol 4-phosphate + NADP(+) = 1-deoxy-D-xylulose 5-phosphate + NADPH + H(+). Its pathway is isoprenoid biosynthesis; isopentenyl diphosphate biosynthesis via DXP pathway; isopentenyl diphosphate from 1-deoxy-D-xylulose 5-phosphate: step 1/6. Catalyzes the NADPH-dependent rearrangement and reduction of 1-deoxy-D-xylulose-5-phosphate (DXP) to 2-C-methyl-D-erythritol 4-phosphate (MEP). This is 1-deoxy-D-xylulose 5-phosphate reductoisomerase from Afipia carboxidovorans (strain ATCC 49405 / DSM 1227 / KCTC 32145 / OM5) (Oligotropha carboxidovorans).